The following is a 348-amino-acid chain: Protein-glutamate methylesterase/protein-glutamine glutaminase 2 (348 aa).

One can recognise a Response regulatory domain in the interval 5–122 (KVLIIDDSAL…DLGLSQYRDE (118 aa)). At D56 the chain carries 4-aspartylphosphate. The region spanning 157–348 (SLKTGFLCAI…AANIIKHALK (192 aa)) is the CheB-type methylesterase domain. Active-site residues include S169, H195, and D291.

This sequence belongs to the CheB family. Post-translationally, phosphorylated by CheA. Phosphorylation of the N-terminal regulatory domain activates the methylesterase activity.

The protein localises to the cytoplasm. The enzyme catalyses [protein]-L-glutamate 5-O-methyl ester + H2O = L-glutamyl-[protein] + methanol + H(+). The catalysed reaction is L-glutaminyl-[protein] + H2O = L-glutamyl-[protein] + NH4(+). Its function is as follows. Involved in chemotaxis. Part of a chemotaxis signal transduction system that modulates chemotaxis in response to various stimuli. Catalyzes the demethylation of specific methylglutamate residues introduced into the chemoreceptors (methyl-accepting chemotaxis proteins or MCP) by CheR. Also mediates the irreversible deamidation of specific glutamine residues to glutamic acid. This chain is Protein-glutamate methylesterase/protein-glutamine glutaminase 2, found in Saccharophagus degradans (strain 2-40 / ATCC 43961 / DSM 17024).